Consider the following 233-residue polypeptide: Large ribosomal subunit protein uL2 (233 aa).

A disordered region spans residues 194–233 (HPHGGGNHQHVGRPSTVGRGTPPGRKVGRLSPKRRKKYGR). Residues 219–233 (KVGRLSPKRRKKYGR) are compositionally biased toward basic residues.

It belongs to the universal ribosomal protein uL2 family. Part of the 50S ribosomal subunit. Forms a bridge to the 30S subunit in the 70S ribosome.

One of the primary rRNA binding proteins. Required for association of the 30S and 50S subunits to form the 70S ribosome, for tRNA binding and peptide bond formation. It has been suggested to have peptidyltransferase activity; this is somewhat controversial. Makes several contacts with the 16S rRNA in the 70S ribosome. This Picrophilus torridus (strain ATCC 700027 / DSM 9790 / JCM 10055 / NBRC 100828 / KAW 2/3) protein is Large ribosomal subunit protein uL2.